The following is an 83-amino-acid chain: Small ribosomal subunit protein eS27 (83 aa).

The C4-type zinc-finger motif lies at 37-59 (CSGCFKISTVFSHATTVVVCVGC).

It belongs to the eukaryotic ribosomal protein eS27 family. Zn(2+) serves as cofactor.

The sequence is that of Small ribosomal subunit protein eS27 (rps-27) from Caenorhabditis elegans.